We begin with the raw amino-acid sequence, 1383 residues long: DNA-directed RNA polymerase subunit beta (1383 aa).

This sequence belongs to the RNA polymerase beta chain family. In terms of assembly, the RNAP catalytic core consists of 2 alpha, 1 beta, 1 beta' and 1 omega subunit. When a sigma factor is associated with the core the holoenzyme is formed, which can initiate transcription.

The enzyme catalyses RNA(n) + a ribonucleoside 5'-triphosphate = RNA(n+1) + diphosphate. In terms of biological role, DNA-dependent RNA polymerase catalyzes the transcription of DNA into RNA using the four ribonucleoside triphosphates as substrates. In Bartonella tribocorum (strain CIP 105476 / IBS 506), this protein is DNA-directed RNA polymerase subunit beta.